We begin with the raw amino-acid sequence, 205 residues long: NADH-quinone oxidoreductase subunit C (205 aa).

This sequence belongs to the complex I 30 kDa subunit family. In terms of assembly, NDH-1 is composed of 14 different subunits. Subunits NuoB, C, D, E, F, and G constitute the peripheral sector of the complex.

The protein localises to the cell inner membrane. The enzyme catalyses a quinone + NADH + 5 H(+)(in) = a quinol + NAD(+) + 4 H(+)(out). Its function is as follows. NDH-1 shuttles electrons from NADH, via FMN and iron-sulfur (Fe-S) centers, to quinones in the respiratory chain. The immediate electron acceptor for the enzyme in this species is believed to be ubiquinone. Couples the redox reaction to proton translocation (for every two electrons transferred, four hydrogen ions are translocated across the cytoplasmic membrane), and thus conserves the redox energy in a proton gradient. The protein is NADH-quinone oxidoreductase subunit C of Bartonella bacilliformis (strain ATCC 35685 / KC583 / Herrer 020/F12,63).